Reading from the N-terminus, the 91-residue chain is uncharacterized protein (91 aa).

3 consecutive transmembrane segments (helical) span residues 9–29 (VLWG…PFLP), 44–64 (LTVN…VFAW), and 71–91 (QFVF…CLAL).

The protein localises to the cell membrane. This is an uncharacterized protein from Bacillus subtilis (strain 168).